A 102-amino-acid chain; its full sequence is U3-aranetoxin-Ce1a (102 aa).

The N-terminal stretch at Met1–Ala21 is a signal peptide.

It belongs to the neurotoxin 20 family. Expressed by the venom gland.

It localises to the secreted. This chain is U3-aranetoxin-Ce1a, found in Caerostris extrusa (Bark spider).